Reading from the N-terminus, the 202-residue chain is ATP-dependent Clp protease proteolytic subunit (202 aa).

Catalysis depends on Ser-106, which acts as the Nucleophile. His-131 is an active-site residue.

Belongs to the peptidase S14 family. As to quaternary structure, fourteen ClpP subunits assemble into 2 heptameric rings which stack back to back to give a disk-like structure with a central cavity, resembling the structure of eukaryotic proteasomes.

It is found in the cytoplasm. It catalyses the reaction Hydrolysis of proteins to small peptides in the presence of ATP and magnesium. alpha-casein is the usual test substrate. In the absence of ATP, only oligopeptides shorter than five residues are hydrolyzed (such as succinyl-Leu-Tyr-|-NHMec, and Leu-Tyr-Leu-|-Tyr-Trp, in which cleavage of the -Tyr-|-Leu- and -Tyr-|-Trp bonds also occurs).. In terms of biological role, cleaves peptides in various proteins in a process that requires ATP hydrolysis. Has a chymotrypsin-like activity. Plays a major role in the degradation of misfolded proteins. This is ATP-dependent Clp protease proteolytic subunit from Paracidovorax citrulli (strain AAC00-1) (Acidovorax citrulli).